The primary structure comprises 128 residues: Small ribosomal subunit protein uS9 (128 aa).

The protein belongs to the universal ribosomal protein uS9 family.

This Amoebophilus asiaticus (strain 5a2) protein is Small ribosomal subunit protein uS9.